Reading from the N-terminus, the 151-residue chain is Small heat shock protein HspH (151 aa).

The 111-residue stretch at 28–138 (RAGEDNYPPY…KPRRIAINAA (111 aa)) folds into the sHSP domain.

This sequence belongs to the small heat shock protein (HSP20) family.

The protein is Small heat shock protein HspH (hspH) of Bradyrhizobium diazoefficiens (strain JCM 10833 / BCRC 13528 / IAM 13628 / NBRC 14792 / USDA 110).